The primary structure comprises 518 residues: Integrator complex subunit 14 (518 aa).

The VWFA domain maps to 2 to 204; sequence PTVVVMDVSL…KNVQSMFGKL (203 aa). 3 residues coordinate Mg(2+): Ser-10, Ser-12, and Thr-86. At Lys-418 the chain carries N6-acetyllysine.

Belongs to the Integrator subunit 14 family. In terms of assembly, component of the Integrator complex, composed of core subunits INTS1, INTS2, INTS3, INTS4, INTS5, INTS6, INTS7, INTS8, INTS9/RC74, INTS10, INTS11/CPSF3L, INTS12, INTS13, INTS14 and INTS15. The core complex associates with protein phosphatase 2A subunits PPP2CA and PPP2R1A, to form the Integrator-PP2A (INTAC) complex. INTS14 is part of the tail subcomplex, composed of INTS10, INTS13, INTS14 and INTS15. Strongly expressed in numerous cancer cells compared with their non-cancerous counterparts (lung, prostate, colon, stomach and skin).

The protein localises to the nucleus. In terms of biological role, component of the integrator complex, a multiprotein complex that terminates RNA polymerase II (Pol II) transcription in the promoter-proximal region of genes. The integrator complex provides a quality checkpoint during transcription elongation by driving premature transcription termination of transcripts that are unfavorably configured for transcriptional elongation: the complex terminates transcription by (1) catalyzing dephosphorylation of the C-terminal domain (CTD) of Pol II subunit POLR2A/RPB1 and SUPT5H/SPT5, (2) degrading the exiting nascent RNA transcript via endonuclease activity and (3) promoting the release of Pol II from bound DNA. The integrator complex is also involved in terminating the synthesis of non-coding Pol II transcripts, such as enhancer RNAs (eRNAs), small nuclear RNAs (snRNAs), telomerase RNAs and long non-coding RNAs (lncRNAs). Within the integrator complex, INTS14 is part of the integrator tail module that acts as a platform for the recruitment of transcription factors at promoters. The polypeptide is Integrator complex subunit 14 (Homo sapiens (Human)).